The following is a 944-amino-acid chain: TBC1 domain family member 31 (944 aa).

WD repeat units follow at residues 12–52 (ELVS…LDTF), 53–95 (QRKR…CDTL), 96–143 (FCKY…ARQL), 144–191 (FRII…IQTC), and 192–229 (KLLFEIGSLDEGISSSAISPHGRYIASIMEDGSLNIYS). A disordered region spans residues 262 to 281 (KRKVTSGRVQQPAKSRESKI). One can recognise a Rab-GAP TBC domain in the interval 300–476 (ELPDGLNKER…KLFDNIFSNH (177 aa)). Coiled coils occupy residues 605 to 735 (QKQE…QKVD) and 791 to 825 (NKCYQEVAKLLRENRRKEIEIINAMVEEEAKKWKE). A compositionally biased stretch (basic and acidic residues) spans 865 to 875 (PCHKEEPRFQN). The segment at 865–900 (PCHKEEPRFQNEQEDSSCLPRTSQLNDSSEMDPSTQ) is disordered. Polar residues predominate over residues 883 to 900 (LPRTSQLNDSSEMDPSTQ). The mediates direct interaction with PJA2 stretch occupies residues 931–934 (QARH).

As to quaternary structure, interacts with PJA2; the interaction is direct and recruits PJA2 to centrosomes. Interacts with OFD1; regulates its activity in cilium assembly. Interacts with PRKACA.

The protein localises to the cytoplasm. Its subcellular location is the cytoskeleton. It localises to the microtubule organizing center. It is found in the centrosome. The protein resides in the centriolar satellite. The protein localises to the cilium basal body. Molecular adapter which is involved in cilium biogenesis. Part of a functional complex including OFD1 a centriolar protein involved in cilium assembly. Could regulate the cAMP-dependent phosphorylation of OFD1, and its subsequent ubiquitination by PJA2 which ultimately leads to its proteasomal degradation. This is TBC1 domain family member 31 from Pongo abelii (Sumatran orangutan).